The sequence spans 855 residues: tRNA(Met) cytidine acetyltransferase TmcA (855 aa).

ATP is bound by residues Q260, 286–295, and R438; that span reads GRGKSALLGI. The N-acetyltransferase domain maps to 480-663; sequence PDLRYWFEDP…GEYSVAVIRP (184 aa). Residues 590-592, 597-603, E630, and R637 contribute to the acetyl-CoA site; these read IAT and MRHGLGS.

This sequence belongs to the RNA cytidine acetyltransferase family. TmcA subfamily.

Its subcellular location is the cytoplasm. The catalysed reaction is cytidine(34) in elongator tRNA(Met) + acetyl-CoA + ATP + H2O = N(4)-acetylcytidine(34) in elongator tRNA(Met) + ADP + phosphate + CoA + H(+). In terms of biological role, catalyzes the formation of N(4)-acetylcytidine (ac(4)C) at the wobble position of tRNA(Met), by using acetyl-CoA as an acetyl donor and ATP (or GTP). This is tRNA(Met) cytidine acetyltransferase TmcA from Methanopyrus kandleri (strain AV19 / DSM 6324 / JCM 9639 / NBRC 100938).